A 268-amino-acid chain; its full sequence is Shikimate dehydrogenase (NADP(+)) (268 aa).

Shikimate is bound by residues 14–16 and Thr-61; that span reads SKS. Lys-65 acts as the Proton acceptor in catalysis. Asn-86 and Asp-102 together coordinate shikimate. NADP(+)-binding positions include 126-130, 149-154, and Met-213; these read GAGGA and NRTFLK. Tyr-215 is a binding site for shikimate. Gly-238 is an NADP(+) binding site.

Belongs to the shikimate dehydrogenase family. As to quaternary structure, homodimer.

The enzyme catalyses shikimate + NADP(+) = 3-dehydroshikimate + NADPH + H(+). Its pathway is metabolic intermediate biosynthesis; chorismate biosynthesis; chorismate from D-erythrose 4-phosphate and phosphoenolpyruvate: step 4/7. Involved in the biosynthesis of the chorismate, which leads to the biosynthesis of aromatic amino acids. Catalyzes the reversible NADPH linked reduction of 3-dehydroshikimate (DHSA) to yield shikimate (SA). The sequence is that of Shikimate dehydrogenase (NADP(+)) from Haemophilus influenzae (strain PittGG).